We begin with the raw amino-acid sequence, 477 residues long: Acetolactate synthase small subunit 2, chloroplastic (477 aa).

The transit peptide at 1-53 (MAATTTATSLFSSRLHFQNQNQGYGFPAKTPNSLQVNQIIDGRKMRNATVLSA) directs the protein to the chloroplast. 2 consecutive ACT domains span residues 78 to 150 (TISV…DLSK) and 309 to 383 (TLSL…NITH). L-valine contacts are provided by aspartate 85, isoleucine 89, isoleucine 90, asparagine 103, isoleucine 104, asparagine 316, valine 320, leucine 321, asparagine 334, and isoleucine 335.

This sequence belongs to the acetolactate synthase small subunit family. As to quaternary structure, the acetolactate synthase complex contains 4 homodimers of the large catalytic subunits, and 1 homotetramer of the small regulatory subunits. Expressed in roots in the vascular tissuem in cells around the quiescent center, in floral organs at the tips of young siliques and in the joint region between the silique and the pedicel. Barely detectable in mature leaves or siliques.

It is found in the plastid. The protein localises to the chloroplast. The protein resides in the peroxisome. It participates in amino-acid biosynthesis; L-isoleucine biosynthesis; L-isoleucine from 2-oxobutanoate: step 1/4. It functions in the pathway amino-acid biosynthesis; L-valine biosynthesis; L-valine from pyruvate: step 1/4. Regulatory subunit of acetohydroxy-acid synthase. Involved in the feed-back inhibition by branched-chain amino acids but not in herbicide tolerance. May play a role in valine and isoleucine-mediated feedback inhibition in roots. In vitro, inhibited by valine, but not leucine or isoleucine. Required for reproductive development and sodium homeostasis. The chain is Acetolactate synthase small subunit 2, chloroplastic from Arabidopsis thaliana (Mouse-ear cress).